Consider the following 340-residue polypeptide: L-lysine 2,3-aminomutase (340 aa).

In terms of domain architecture, Radical SAM core spans 106–321 (RKYNNRILLL…SMISGFLVPK (216 aa)). [4Fe-4S] cluster is bound by residues Cys120, Cys124, and Cys127. Lys332 bears the N6-(pyridoxal phosphate)lysine mark.

The protein belongs to the radical SAM superfamily. KamA family. It depends on [4Fe-4S] cluster as a cofactor. Pyridoxal 5'-phosphate serves as cofactor.

The enzyme catalyses L-lysine = D-beta-lysine. Functionally, with EpmA is involved in the beta-lysylation step of the post-translational modification of translation elongation factor P (EF-P) on 'Lys-34'. EpmB appears to act before EpmA. Displays lysine 2,3-aminomutase activity, producing (R)-beta-lysine from (S)-alpha-lysine (L-lysine). The chain is L-lysine 2,3-aminomutase (epmB) from Buchnera aphidicola subsp. Baizongia pistaciae (strain Bp).